The sequence spans 127 residues: Glycine cleavage system H protein (127 aa).

A Lipoyl-binding domain is found at 24-105; sequence TAVVGITDFA…YNEGWIVKMK (82 aa). The residue at position 65 (Lys-65) is an N6-lipoyllysine.

Belongs to the GcvH family. As to quaternary structure, the glycine cleavage system is composed of four proteins: P, T, L and H. (R)-lipoate is required as a cofactor.

Functionally, the glycine cleavage system catalyzes the degradation of glycine. The H protein shuttles the methylamine group of glycine from the P protein to the T protein. The sequence is that of Glycine cleavage system H protein from Chlorobaculum parvum (strain DSM 263 / NCIMB 8327) (Chlorobium vibrioforme subsp. thiosulfatophilum).